Reading from the N-terminus, the 327-residue chain is Malate dehydrogenase (327 aa).

12 to 18 provides a ligand contact to NAD(+); the sequence is GAAGQIG. Substrate is bound by residues arginine 93 and arginine 99. NAD(+)-binding positions include asparagine 106, glutamine 113, and 130–132; that span reads VGN. Substrate is bound by residues asparagine 132 and arginine 163. The Proton acceptor role is filled by histidine 188.

Belongs to the LDH/MDH superfamily. MDH type 2 family.

The catalysed reaction is (S)-malate + NAD(+) = oxaloacetate + NADH + H(+). Functionally, catalyzes the reversible oxidation of malate to oxaloacetate. In Cupriavidus metallidurans (strain ATCC 43123 / DSM 2839 / NBRC 102507 / CH34) (Ralstonia metallidurans), this protein is Malate dehydrogenase.